A 346-amino-acid chain; its full sequence is Holliday junction branch migration complex subunit RuvB (346 aa).

Residues 1–11 are compositionally biased toward polar residues; it reads MTEQRTIASSA. The segment at 1–20 is disordered; it reads MTEQRTIASSATREDEAADA. The tract at residues 1 to 183 is large ATPase domain (RuvB-L); the sequence is MTEQRTIASS…FGIVQRLEFY (183 aa). ATP contacts are provided by residues isoleucine 22, arginine 23, glycine 64, lysine 67, threonine 68, threonine 69, 130-132, arginine 173, tyrosine 183, and arginine 220; that span reads EDF. Residue threonine 68 coordinates Mg(2+). The interval 184-254 is small ATPAse domain (RuvB-S); it reads SPQELTRIVI…VAQAAMQMLK (71 aa). Positions 257–346 are head domain (RuvB-H); the sequence is PEGFDELDRR…PAIGEPGDLF (90 aa). DNA contacts are provided by arginine 293, arginine 312, and arginine 317.

This sequence belongs to the RuvB family. As to quaternary structure, homohexamer. Forms an RuvA(8)-RuvB(12)-Holliday junction (HJ) complex. HJ DNA is sandwiched between 2 RuvA tetramers; dsDNA enters through RuvA and exits via RuvB. An RuvB hexamer assembles on each DNA strand where it exits the tetramer. Each RuvB hexamer is contacted by two RuvA subunits (via domain III) on 2 adjacent RuvB subunits; this complex drives branch migration. In the full resolvosome a probable DNA-RuvA(4)-RuvB(12)-RuvC(2) complex forms which resolves the HJ.

Its subcellular location is the cytoplasm. It catalyses the reaction ATP + H2O = ADP + phosphate + H(+). Its function is as follows. The RuvA-RuvB-RuvC complex processes Holliday junction (HJ) DNA during genetic recombination and DNA repair, while the RuvA-RuvB complex plays an important role in the rescue of blocked DNA replication forks via replication fork reversal (RFR). RuvA specifically binds to HJ cruciform DNA, conferring on it an open structure. The RuvB hexamer acts as an ATP-dependent pump, pulling dsDNA into and through the RuvAB complex. RuvB forms 2 homohexamers on either side of HJ DNA bound by 1 or 2 RuvA tetramers; 4 subunits per hexamer contact DNA at a time. Coordinated motions by a converter formed by DNA-disengaged RuvB subunits stimulates ATP hydrolysis and nucleotide exchange. Immobilization of the converter enables RuvB to convert the ATP-contained energy into a lever motion, pulling 2 nucleotides of DNA out of the RuvA tetramer per ATP hydrolyzed, thus driving DNA branch migration. The RuvB motors rotate together with the DNA substrate, which together with the progressing nucleotide cycle form the mechanistic basis for DNA recombination by continuous HJ branch migration. Branch migration allows RuvC to scan DNA until it finds its consensus sequence, where it cleaves and resolves cruciform DNA. This Xanthomonas campestris pv. campestris (strain 8004) protein is Holliday junction branch migration complex subunit RuvB.